The following is a 479-amino-acid chain: Adenosylhomocysteinase (479 aa).

The substrate site is built by T65, D145, and E205. Position 206 to 208 (206 to 208) interacts with NAD(+); that stretch reads TTT. The substrate site is built by K235 and D239. NAD(+)-binding positions include N240, 269-274, E292, N327, 348-350, and N393; these read GYGDVG and IGH.

This sequence belongs to the adenosylhomocysteinase family. The cofactor is NAD(+).

Its subcellular location is the cytoplasm. It catalyses the reaction S-adenosyl-L-homocysteine + H2O = L-homocysteine + adenosine. The protein operates within amino-acid biosynthesis; L-homocysteine biosynthesis; L-homocysteine from S-adenosyl-L-homocysteine: step 1/1. In terms of biological role, may play a key role in the regulation of the intracellular concentration of adenosylhomocysteine. The chain is Adenosylhomocysteinase from Janthinobacterium sp. (strain Marseille) (Minibacterium massiliensis).